A 291-amino-acid polypeptide reads, in one-letter code: MADLDDIKDGKDFHTDKPQTNTLFALKGCGALDWGMQSRLARIFNPKTRKTVMLAFDHGYFQGPTTGLERIDINIAPLFEYADVLMCTRGILRSVVPPAINKPVVLRASGANSILTELSNEAVAVAMDDAVRLNSCAAAAQVYIGSEHEHQSIKNIIQLIDAGLRVGMPIMAVTGVGKDMARDQRYFSLATRIAAEMGAQIIKTYYVDKGFERIAAGCPVPIVIAGGKKLPEREALEMCYQAIDQGASGVDMGRNIFQSEDPVAMIKAVHAVVHHNETAERAYELFLSEKG.

K203 (schiff-base intermediate with substrate) is an active-site residue.

The protein belongs to the DeoC/FbaB aldolase family. Homodecamer.

The protein localises to the cytoplasm. It catalyses the reaction dihydroxyacetone phosphate + acetyl-CoA = 3-hydroxy-2,4-dioxopentyl phosphate + CoA. Functionally, involved in the degradation of phospho-AI-2, thereby terminating induction of the lsr operon and closing the AI-2 signaling cycle. Catalyzes the transfer of an acetyl moiety from 3-hydroxy-5-phosphonooxypentane-2,4-dione to CoA to form glycerone phosphate and acetyl-CoA. The sequence is that of 3-hydroxy-5-phosphonooxypentane-2,4-dione thiolase from Salmonella paratyphi A (strain ATCC 9150 / SARB42).